We begin with the raw amino-acid sequence, 707 residues long: Bone morphogenetic protein 1 (707 aa).

The disordered stretch occupies residues 57 to 90 (SGAATNISRPEKGRRTRKERRRSREKRASTSRPE). Asn-62 carries an N-linked (GlcNAc...) asparagine glycan. Basic residues predominate over residues 68–81 (KGRRTRKERRRSRE). The region spanning 84–283 (ASTSRPERVW…AQARKLYKCP (200 aa)) is the Peptidase M12A domain. N-linked (GlcNAc...) asparagine glycosylation is present at Asn-105. 4 disulfide bridges follow: Cys-126/Cys-282, Cys-146/Cys-168, Cys-148/Cys-149, and Cys-285/Cys-311. His-176 contributes to the Zn(2+) binding site. Glu-177 is a catalytic residue. His-180 and His-186 together coordinate Zn(2+). 2 consecutive CUB domains span residues 285 to 397 (CGET…YEAL) and 398 to 509 (CGGE…NYFK). N-linked (GlcNAc...) asparagine glycans are attached at residues Asn-295 and Asn-326. 8 disulfide bridges follow: Cys-338-Cys-360, Cys-398-Cys-424, Cys-451-Cys-473, Cys-514-Cys-526, Cys-522-Cys-535, Cys-537-Cys-550, Cys-554-Cys-580, and Cys-607-Cys-629. One can recognise an EGF-like; calcium-binding domain in the interval 510–551 (EVDECSRPNNGGCEQRCVNTLGSYKCACDPGYELGQDKKSCE). The 113-residue stretch at 554-666 (CGGFLTKLNG…KGFQANFFSE (113 aa)) folds into the CUB 3 domain. Asn-562 carries an N-linked (GlcNAc...) asparagine glycan. A disordered region spans residues 682 to 707 (RGQQNQAPKRVRPRMRLRTVKKTRPP). Residues 690–707 (KRVRPRMRLRTVKKTRPP) show a composition bias toward basic residues.

In terms of assembly, interacts with olfml3/ont1. The cofactor is Zn(2+). Proteolytically activated in the trans-Golgi network by furin-like/paired basic proprotein convertases, cleavage is not required for secretion.

The protein resides in the golgi apparatus. It localises to the trans-Golgi network. Its subcellular location is the secreted. It is found in the extracellular space. The protein localises to the extracellular matrix. Metalloprotease involved in pattern formation in gastrula and later differentiation of developing organs. Able to cleave chordin (chrd), suggesting that it may act in dorsoventral patterning during early development by regulating the chordin (chrd) activity. The protein is Bone morphogenetic protein 1 (bmp1) of Xenopus laevis (African clawed frog).